The sequence spans 576 residues: DNA primase (576 aa).

The CHC2-type zinc finger occupies 40-64 (CPFHNEKTPSFNVVAKKQFYHCFGC). Residues 251-333 (DSIIVVEGYM…GLDAGFIFLP (83 aa)) enclose the Toprim domain. Glu257, Asp301, and Asp303 together coordinate Mg(2+).

Belongs to the DnaG primase family. As to quaternary structure, monomer. Interacts with DnaB. Zn(2+) is required as a cofactor. It depends on Mg(2+) as a cofactor.

It catalyses the reaction ssDNA + n NTP = ssDNA/pppN(pN)n-1 hybrid + (n-1) diphosphate.. Functionally, RNA polymerase that catalyzes the synthesis of short RNA molecules used as primers for DNA polymerase during DNA replication. This Legionella pneumophila protein is DNA primase.